Consider the following 790-residue polypeptide: Lon protease 2 (790 aa).

One can recognise a Lon N-terminal domain in the interval 18-210 (LRILPLRNMV…HVTFYMTRQL (193 aa)). Position 362-369 (362-369 (GPPGVGKT)) interacts with ATP. The region spanning 598–779 (SWGCGIATGL…SDVLQLALLP (182 aa)) is the Lon proteolytic domain. Catalysis depends on residues Ser685 and Lys728.

Belongs to the peptidase S16 family. As to quaternary structure, homohexamer. Organized in a ring with a central cavity.

The protein resides in the cytoplasm. The catalysed reaction is Hydrolysis of proteins in presence of ATP.. Its function is as follows. ATP-dependent serine protease that mediates the selective degradation of mutant and abnormal proteins as well as certain short-lived regulatory proteins. Required for cellular homeostasis and for survival from DNA damage and developmental changes induced by stress. Degrades polypeptides processively to yield small peptide fragments that are 5 to 10 amino acids long. Binds to DNA in a double-stranded, site-specific manner. This is Lon protease 2 from Syntrophobacter fumaroxidans (strain DSM 10017 / MPOB).